The sequence spans 236 residues: Sugar fermentation stimulation protein homolog (236 aa).

The protein belongs to the SfsA family.

The chain is Sugar fermentation stimulation protein homolog from Proteus mirabilis (strain HI4320).